The following is a 308-amino-acid chain: 1,4-dihydroxy-2-naphthoate octaprenyltransferase (308 aa).

Helical transmembrane passes span 22–42 (TLPL…WANP), 47–67 (GLVM…SNFA), 101–121 (WGLI…IGIA), 129–149 (FAFA…TVGV), 153–173 (GYMG…GVGG), 186–206 (IILP…INNL), 235–255 (ILLS…AISW), 256–276 (TNYL…FVYC), and 286–306 (ILAQ…LGLL).

It belongs to the MenA family. Type 1 subfamily.

It localises to the cell inner membrane. The enzyme catalyses an all-trans-polyprenyl diphosphate + 1,4-dihydroxy-2-naphthoate + H(+) = a 2-demethylmenaquinol + CO2 + diphosphate. It functions in the pathway quinol/quinone metabolism; menaquinone biosynthesis; menaquinol from 1,4-dihydroxy-2-naphthoate: step 1/2. Its function is as follows. Conversion of 1,4-dihydroxy-2-naphthoate (DHNA) to demethylmenaquinone (DMK). This Haemophilus influenzae (strain ATCC 51907 / DSM 11121 / KW20 / Rd) protein is 1,4-dihydroxy-2-naphthoate octaprenyltransferase.